A 718-amino-acid polypeptide reads, in one-letter code: Catalase-peroxidase (718 aa).

Positions 98–219 form a cross-link, tryptophyl-tyrosyl-methioninium (Trp-Tyr) (with M-245); sequence WHAAGTYRMG…LAATEMGLIY (122 aa). Histidine 99 acts as the Proton acceptor in catalysis. Residues 219–245 constitute a cross-link (tryptophyl-tyrosyl-methioninium (Tyr-Met) (with W-98)); the sequence is YVNPEGPQASGDPRSAAPFIRATFGNM. Histidine 260 contributes to the heme b binding site.

This sequence belongs to the peroxidase family. Peroxidase/catalase subfamily. Homodimer or homotetramer. It depends on heme b as a cofactor. Post-translationally, formation of the three residue Trp-Tyr-Met cross-link is important for the catalase, but not the peroxidase activity of the enzyme.

It carries out the reaction H2O2 + AH2 = A + 2 H2O. The enzyme catalyses 2 H2O2 = O2 + 2 H2O. Functionally, bifunctional enzyme with both catalase and broad-spectrum peroxidase activity. This chain is Catalase-peroxidase, found in Acinetobacter baumannii (strain ATCC 17978 / DSM 105126 / CIP 53.77 / LMG 1025 / NCDC KC755 / 5377).